Reading from the N-terminus, the 541-residue chain is Ascorbate transporter, chloroplastic (541 aa).

A chloroplast-targeting transit peptide spans 1-28; that stretch reads MALGGLISNRNFGSFIGSGNGCQRLGKS. 11 consecutive transmembrane segments (helical) span residues 133 to 155, 170 to 190, 199 to 219, 221 to 241, 263 to 283, 286 to 306, 352 to 372, 390 to 410, 430 to 450, 481 to 501, and 515 to 535; these read VIVLLCFSSFLLCNMDRVNMSIA, VGLIQSSFFWGYLLTQILGGI, VVLGFGVVWWSFATIMTPIAA, LGLPFLLVVRAFMGIGEGVAM, LVYSGMYLGSVTGLAFSPMLI, FGWPSVFYSFGSLGSIWFLLW, VWALIISHFCHNWGTFILLTW, LLCVLPWLTMAVFANIGGWIA, IGFLGPAFFLSQLSHVKTPAM, AGVLLGLSNTAGVLAGVFGTA, and VFKVAVALYLIGTLVWNLFAT.

This sequence belongs to the major facilitator superfamily. Sodium/anion cotransporter (TC 2.A.1.14) family. Expressed in stems, developing siliques, leaf mesophyll cells and sepals of mature flowers. Not detected in roots. Detected in palisade tissue rather than spongy tissue from the leaves.

The protein resides in the plastid. Its subcellular location is the chloroplast inner membrane. With respect to regulation, insensitive to dehydroascorbate, p-isoascorbate, inorganic phosphate, glutamate, ATP, p-aminohippuric acid or tetraethylammonium. Inorganic phosphate and probable anion transporter. Ascorbate transporter bridging the chloroplast envelope. Transports ascorbate from the cytosol into the chloroplast. Requires chloride ions and the presence of an electrochemical potential across the membrane for activity. This is Ascorbate transporter, chloroplastic (PHT4;4) from Arabidopsis thaliana (Mouse-ear cress).